Consider the following 175-residue polypeptide: Large ribosomal subunit protein uL22y (175 aa).

The span at 153–163 (EKEEPVKKEPE) shows a compositional bias: basic and acidic residues. Residues 153–175 (EKEEPVKKEPETQLAAKSKKSAA) are disordered.

Belongs to the universal ribosomal protein uL22 family.

In Arabidopsis thaliana (Mouse-ear cress), this protein is Large ribosomal subunit protein uL22y (RPL17B).